The following is a 510-amino-acid chain: uncharacterized protein (510 aa).

Topologically, residues 1–89 (MTSSLDDIEP…QGQRKKVLLK (89 aa)) are lumenal. The tract at residues 38 to 76 (AVSQGVPDMDGQTTDSSKDPEPNSEDKKAFPPSSGSFFS) is disordered. Over residues 53 to 66 (SSKDPEPNSEDKKA) the composition is skewed to basic and acidic residues. Low complexity predominate over residues 67 to 76 (FPPSSGSFFS). A helical transmembrane segment spans residues 90–110 (FVFTNCLLAIICFTMFVLFWG). Topologically, residues 111 to 123 (ALYDTSKYLHKVK) are cytoplasmic. The chain crosses the membrane as a helical span at residues 124–144 (LLVVIQEPPVVILDNNSSMVV). Residues 145–312 (PSISYALPTF…TDRILLAPTQ (168 aa)) lie on the Lumenal side of the membrane. A helical membrane pass occupies residues 313 to 333 (IGVVYCLLLTFFQFLLYGPLH). The Cytoplasmic segment spans residues 334-349 (VEMAKVLRPANGLIYR). A helical membrane pass occupies residues 350–370 (IAMSWFTFFFASLFFCTTTAI). Residues 371–381 (FQVDFTKSFGR) lie on the Lumenal side of the membrane. Residues 382-402 (GGFVVYWMSTWLFMLAAGGAN) traverse the membrane as a helical segment. Over 403 to 416 (ENAVMLVITLGPQY) the chain is Cytoplasmic. A helical transmembrane segment spans residues 417–437 (LGFWILSFVILNIAPSFFPLA). Over 438-474 (LNNNVYRYGYMMPVHNVIDIYRVIFFDVTRRKMGRNY) the chain is Lumenal. The helical transmembrane segment at 475 to 495 (GILVALIALNTALLPFVGKYA) threads the bilayer. The Cytoplasmic segment spans residues 496–510 (SRKLKQKALVAAKQS).

The protein to yeast SNG1.

It is found in the endoplasmic reticulum membrane. This is an uncharacterized protein from Saccharomyces cerevisiae (strain ATCC 204508 / S288c) (Baker's yeast).